We begin with the raw amino-acid sequence, 56 residues long: 4Fe-4S ferredoxin FdxA (56 aa).

2 consecutive 4Fe-4S ferredoxin-type domains span residues 1 to 28 (MAYV…SSGD) and 29 to 56 (DRYV…PVQA). Residues cysteine 9, cysteine 12, cysteine 15, cysteine 19, cysteine 38, cysteine 41, cysteine 44, and cysteine 48 each coordinate [4Fe-4S] cluster.

It depends on [4Fe-4S] cluster as a cofactor.

Functionally, ferredoxins are iron-sulfur proteins that transfer electrons in a wide variety of metabolic reactions. This is 4Fe-4S ferredoxin FdxA from Gottschalkia acidurici (strain ATCC 7906 / DSM 604 / BCRC 14475 / CIP 104303 / KCTC 5404 / NCIMB 10678 / 9a) (Clostridium acidurici).